The following is a 296-amino-acid chain: 4-hydroxy-tetrahydrodipicolinate synthase (296 aa).

Threonine 49 provides a ligand contact to pyruvate. The Proton donor/acceptor role is filled by tyrosine 137. Lysine 165 serves as the catalytic Schiff-base intermediate with substrate. Isoleucine 208 contacts pyruvate.

Belongs to the DapA family. Homotetramer; dimer of dimers.

The protein localises to the cytoplasm. The catalysed reaction is L-aspartate 4-semialdehyde + pyruvate = (2S,4S)-4-hydroxy-2,3,4,5-tetrahydrodipicolinate + H2O + H(+). The protein operates within amino-acid biosynthesis; L-lysine biosynthesis via DAP pathway; (S)-tetrahydrodipicolinate from L-aspartate: step 3/4. In terms of biological role, catalyzes the condensation of (S)-aspartate-beta-semialdehyde [(S)-ASA] and pyruvate to 4-hydroxy-tetrahydrodipicolinate (HTPA). The chain is 4-hydroxy-tetrahydrodipicolinate synthase from Ehrlichia canis (strain Jake).